The chain runs to 189 residues: MKKSLFATGLAIAMALPLGAQAADYVIDTKGAHASINFKVSHLGYSFIKGRFNTFSGDFSFDEKNIADSKVNVVVDTTSLDSNHAERDKHIRSGDFIDAGKYSEATFKSTKVVDKGNGKLDVTGDLTLHGVTKPITIEAEFVGAGNDPWGGERAGFVGTTRLELADFDIPVMGSSSYVDMELHIEGVKK.

A signal peptide spans 1–22; the sequence is MKKSLFATGLAIAMALPLGAQA.

The protein belongs to the UPF0312 family. Type 1 subfamily.

The protein resides in the periplasm. The protein is UPF0312 protein VPA0850 of Vibrio parahaemolyticus serotype O3:K6 (strain RIMD 2210633).